The following is a 390-amino-acid chain: Heparan sulfate glucosamine 3-O-sulfotransferase 3B1 (390 aa).

Residues 1 to 25 form a disordered region; sequence MGQRLSGGRSCLDVPGRLLPQPPPP. The Cytoplasmic portion of the chain corresponds to 1-32; sequence MGQRLSGGRSCLDVPGRLLPQPPPPPPPVRRK. A helical; Signal-anchor for type II membrane protein membrane pass occupies residues 33-53; the sequence is LALLFAMLCVWLYMFLYSCAG. At 54 to 390 the chain is on the lumenal side; sequence SCAAAPGLLL…QMTGHDFGWD (337 aa). The interval 74-133 is disordered; that stretch reads PPALATAPDGTPPRLPFRAPPATPLASGKEMAEGAASPEEQSPEVPDSPSPISSFFSGSG. Pro residues predominate over residues 83 to 96; it reads GTPPRLPFRAPPAT. Positions 123–133 are enriched in low complexity; sequence SPISSFFSGSG. Position 147 to 151 (147 to 151) interacts with 3'-phosphoadenylyl sulfate; it reads KGGTR. Residues 169–175 and 200–203 each bind substrate; these read EPHFFDR and KTPS. The 3'-phosphoadenylyl sulfate site is built by arginine 228 and serine 236. Asparagine 258 carries N-linked (GlcNAc...) asparagine glycosylation. 268–269 contacts substrate; the sequence is WS. A glycan (N-linked (GlcNAc...) asparagine) is linked at asparagine 329. An intrachain disulfide couples cysteine 336 to cysteine 348. 353 to 357 provides a ligand contact to 3'-phosphoadenylyl sulfate; it reads KGRTH.

The protein belongs to the sulfotransferase 1 family. In terms of tissue distribution, ubiquitous. Most abundant in liver and placenta, followed by heart and kidney.

Its subcellular location is the golgi apparatus membrane. It catalyses the reaction alpha-D-glucosaminyl-[heparan sulfate](n) + 3'-phosphoadenylyl sulfate = 3-sulfo-alpha-D-glucosaminyl-[heparan sulfate](n) + adenosine 3',5'-bisphosphate + H(+). Its function is as follows. Sulfotransferase that utilizes 3'-phospho-5'-adenylyl sulfate (PAPS) to catalyze the transfer of a sulfo group to an N-unsubstituted glucosamine linked to a 2-O-sulfo iduronic acid unit on heparan sulfate. Catalyzes the O-sulfation of glucosamine in IdoUA2S-GlcNS and also in IdoUA2S-GlcNH2. The substrate-specific O-sulfation generates an enzyme-modified heparan sulfate which acts as a binding receptor to Herpes simplex virus-1 (HSV-1) and permits its entry. Unlike HS3ST1/3-OST-1, does not convert non-anticoagulant heparan sulfate to anticoagulant heparan sulfate. This is Heparan sulfate glucosamine 3-O-sulfotransferase 3B1 (HS3ST3B1) from Homo sapiens (Human).